The chain runs to 469 residues: Mitochondrial-processing peptidase subunit beta (469 aa).

Histidine 78 serves as a coordination point for Zn(2+). Glutamate 81 functions as the Proton acceptor in the catalytic mechanism. Positions 82 and 159 each coordinate Zn(2+).

The protein belongs to the peptidase M16 family. Heterodimer of alpha and beta subunits, forming the mitochondrial processing protease (MPP) in which subunit alpha is involved in substrate recognition and binding and subunit beta is the catalytic subunit. mppB is probably also part of the cytochrome bc1 complex as a core I protein in the mitochondrial inner membrane. Zn(2+) serves as cofactor.

It localises to the mitochondrion inner membrane. Its subcellular location is the mitochondrion matrix. It catalyses the reaction Release of N-terminal transit peptides from precursor proteins imported into the mitochondrion, typically with Arg in position P2.. Binding to alpha subunit is required for catalytic activity. Catalytic subunit of the essential mitochondrial processing protease (MPP), which cleaves the mitochondrial sequence off newly imported precursors proteins. Preferentially, cleaves after an arginine at position P2. Plays an essential role in mitochondrial biogenesis. This chain is Mitochondrial-processing peptidase subunit beta (mppB), found in Dictyostelium discoideum (Social amoeba).